An 87-amino-acid polypeptide reads, in one-letter code: Defensin-like protein 176 (87 aa).

An N-terminal signal peptide occupies residues Met1–Gln23. 4 cysteine pairs are disulfide-bonded: Cys27–Cys66, Cys36–Cys55, Cys39–Cys60, and Cys43–Cys62.

This sequence belongs to the DEFL family.

The protein localises to the secreted. This Arabidopsis thaliana (Mouse-ear cress) protein is Defensin-like protein 176 (LCR65).